The chain runs to 413 residues: Cardiolipin synthase B (413 aa).

2 consecutive PLD phosphodiesterase domains span residues 108–135 (VFRR…SAEH) and 285–312 (RRRP…DPLS). Residues histidine 113, lysine 115, aspartate 120, histidine 290, lysine 292, and aspartate 297 contribute to the active site. The interval 390–413 (VDPPAQPTMETQDRVETENTGVKP) is disordered.

It belongs to the phospholipase D family. Cardiolipin synthase subfamily. ClsB sub-subfamily.

It is found in the cell membrane. The enzyme catalyses 2 a 1,2-diacyl-sn-glycero-3-phospho-(1'-sn-glycerol) = a cardiolipin + glycerol. Its function is as follows. Catalyzes the phosphatidyl group transfer from one phosphatidylglycerol molecule to another to form cardiolipin (CL) (diphosphatidylglycerol) and glycerol. This Escherichia coli O157:H7 protein is Cardiolipin synthase B.